The primary structure comprises 102 residues: Large ribosomal subunit protein bL21 (102 aa).

This sequence belongs to the bacterial ribosomal protein bL21 family. As to quaternary structure, part of the 50S ribosomal subunit. Contacts protein L20.

Its function is as follows. This protein binds to 23S rRNA in the presence of protein L20. The polypeptide is Large ribosomal subunit protein bL21 (Syntrophotalea carbinolica (strain DSM 2380 / NBRC 103641 / GraBd1) (Pelobacter carbinolicus)).